The primary structure comprises 277 residues: Nuclear egress protein 2 (277 aa).

Residues 1 to 250 are Perinuclear space-facing; that stretch reads MEVIPNINSR…ASGECVTTIR (250 aa). The helical transmembrane segment at 251–271 threads the bilayer; it reads IPRYIVMLWIFSVLLAMVTWG. Topologically, residues 272-277 are nuclear; it reads SYRLYS.

Belongs to the herpesviridae NEC2 protein family. In terms of assembly, forms a heterohexameric complex with NEC1. In terms of processing, phosphorylated.

The protein resides in the host nucleus inner membrane. Functionally, plays an essential role in virion nuclear egress, the first step of virion release from infected cell. Within the host nucleus, NEC1 interacts with the newly formed capsid through the vertexes and directs it to the inner nuclear membrane by associating with NEC2. Induces the budding of the capsid at the inner nuclear membrane as well as its envelopment into the perinuclear space. There, the NEC1/NEC2 complex promotes the fusion of the enveloped capsid with the outer nuclear membrane and the subsequent release of the viral capsid into the cytoplasm where it will reach the secondary budding sites in the host Golgi or trans-Golgi network. The protein is Nuclear egress protein 2 of Gallid herpesvirus 2 (strain Chicken/Md5/ATCC VR-987) (GaHV-2).